The following is a 400-amino-acid chain: tRNA(Met) cytidine acetate ligase (400 aa).

ATP-binding positions include 7–20, G101, N162, and R187; that span reads IVEY…HQYH.

Belongs to the TmcAL family.

It localises to the cytoplasm. The catalysed reaction is cytidine(34) in elongator tRNA(Met) + acetate + ATP = N(4)-acetylcytidine(34) in elongator tRNA(Met) + AMP + diphosphate. Its function is as follows. Catalyzes the formation of N(4)-acetylcytidine (ac(4)C) at the wobble position of elongator tRNA(Met), using acetate and ATP as substrates. First activates an acetate ion to form acetyladenylate (Ac-AMP) and then transfers the acetyl group to tRNA to form ac(4)C34. The sequence is that of tRNA(Met) cytidine acetate ligase from Oceanobacillus iheyensis (strain DSM 14371 / CIP 107618 / JCM 11309 / KCTC 3954 / HTE831).